A 355-amino-acid chain; its full sequence is tRNA N6-adenosine threonylcarbamoyltransferase (355 aa).

Fe cation-binding residues include H111 and H115. Substrate-binding positions include 134-138, D167, G180, D184, and N279; that span reads LVSGG. D307 is a binding site for Fe cation.

Belongs to the KAE1 / TsaD family. Requires Fe(2+) as cofactor.

The protein resides in the cytoplasm. It catalyses the reaction L-threonylcarbamoyladenylate + adenosine(37) in tRNA = N(6)-L-threonylcarbamoyladenosine(37) in tRNA + AMP + H(+). In terms of biological role, required for the formation of a threonylcarbamoyl group on adenosine at position 37 (t(6)A37) in tRNAs that read codons beginning with adenine. Is involved in the transfer of the threonylcarbamoyl moiety of threonylcarbamoyl-AMP (TC-AMP) to the N6 group of A37, together with TsaE and TsaB. TsaD likely plays a direct catalytic role in this reaction. In Picosynechococcus sp. (strain ATCC 27264 / PCC 7002 / PR-6) (Agmenellum quadruplicatum), this protein is tRNA N6-adenosine threonylcarbamoyltransferase.